Reading from the N-terminus, the 160-residue chain is Prorelaxin (160 aa).

Intrachain disulfides connect cysteine 10–cysteine 147, cysteine 22–cysteine 160, and cysteine 146–cysteine 151. Residues glutamine 34–proline 133 constitute a propeptide, connecting peptide.

Belongs to the insulin family. As to quaternary structure, heterodimer of a B chain and an A chain linked by two disulfide bonds. As to expression, expressed in the endometrium during pregnancy and in mammary gland during lactation.

The protein resides in the secreted. In terms of biological role, relaxin is an ovarian hormone that acts with estrogen to produce dilatation of the birth canal in many mammals. It bears mature young, and allows separation of the pelvic bones. The polypeptide is Prorelaxin (RLN) (Cavia porcellus (Guinea pig)).